The following is a 301-amino-acid chain: Rhodopsin (301 aa).

Residues 1–18 are Extracellular-facing; the sequence is LHMIHLHWYQYPPMNPMM. Residues 19-43 form a helical membrane-spanning segment; it reads YPLLLVFMLITGILCLAGNFVTIWV. Topologically, residues 44–55 are cytoplasmic; that stretch reads FMNTKSLRTPAN. The helical transmembrane segment at 56–78 threads the bilayer; that stretch reads LLVVNLAMSDFLMMFTMFPPMMI. The Extracellular portion of the chain corresponds to 79–92; sequence TCYYHTWTLGATFC. Cysteine 92 and cysteine 169 form a disulfide bridge. A helical transmembrane segment spans residues 93 to 115; sequence EVYAFLGNLCGCASIWTMVFITF. Residues 116–118 carry the 'Ionic lock' involved in activated form stabilization motif; sequence DRY. Topologically, residues 116 to 134 are cytoplasmic; that stretch reads DRYNVIVKGVAGEPLSTKK. A helical membrane pass occupies residues 135–155; that stretch reads ASLWILTVWVLSFTWCVAPFF. Residues 156–182 are Extracellular-facing; sequence GWNRYVPEGNLTGCGTDYLSEDILSRS. N-linked (GlcNAc...) asparagine glycosylation is present at asparagine 165. The chain crosses the membrane as a helical span at residues 183 to 204; sequence YLYIYSTWVYFLPLAITIYCYV. Topologically, residues 205–245 are cytoplasmic; the sequence is FIIKAVAAHEKGMRDQAKKMGIKSLRNEEAQKTSAECRLAK. The chain crosses the membrane as a helical span at residues 246–267; sequence IAMTTVALWFIAWTPYLLINWV. At 268–278 the chain is on the extracellular side; sequence GMFARSYLSPV. Residues 279 to 300 traverse the membrane as a helical segment; it reads YTIWGYVFAKANAVYNPIVYAI. The residue at position 288 (lysine 288) is an N6-(retinylidene)lysine.

This sequence belongs to the G-protein coupled receptor 1 family. Opsin subfamily. Homodimer. Interacts with GNAQ. Post-translationally, contains one covalently linked retinal chromophore.

The protein resides in the cell projection. It localises to the rhabdomere membrane. Its function is as follows. Photoreceptor required for image-forming vision at low light intensity. Can use both retinal and 3-dehydroretinal as visual pigment. Light-induced isomerization of 11-cis to all-trans retinal triggers a conformational change that activates signaling via G-proteins. Signaling via GNAQ probably mediates the activation of phospholipase C. This Lacunicambarus ludovicianus (Painted devil crayfish) protein is Rhodopsin (RHO).